The chain runs to 360 residues: Peptide chain release factor 1 (360 aa).

An N5-methylglutamine modification is found at Q235.

It belongs to the prokaryotic/mitochondrial release factor family. Methylated by PrmC. Methylation increases the termination efficiency of RF1.

It is found in the cytoplasm. In terms of biological role, peptide chain release factor 1 directs the termination of translation in response to the peptide chain termination codons UAG and UAA. The protein is Peptide chain release factor 1 of Burkholderia vietnamiensis (strain G4 / LMG 22486) (Burkholderia cepacia (strain R1808)).